Consider the following 277-residue polypeptide: Large ribosomal subunit protein uL2 (277 aa).

The tract at residues 222 to 277 (GVAMNPIDHPHGGGEGRTSGGRHPVTPWGKPTKGKKTRTNKSTDKFILLSRHKRKK) is disordered.

The protein belongs to the universal ribosomal protein uL2 family. In terms of assembly, part of the 50S ribosomal subunit. Forms a bridge to the 30S subunit in the 70S ribosome.

Functionally, one of the primary rRNA binding proteins. Required for association of the 30S and 50S subunits to form the 70S ribosome, for tRNA binding and peptide bond formation. It has been suggested to have peptidyltransferase activity; this is somewhat controversial. Makes several contacts with the 16S rRNA in the 70S ribosome. The polypeptide is Large ribosomal subunit protein uL2 (Bradyrhizobium sp. (strain ORS 278)).